Reading from the N-terminus, the 142-residue chain is uncharacterized protein (142 aa).

As to quaternary structure, homodimer.

This is an uncharacterized protein from Bacillus subtilis (strain 168).